A 193-amino-acid polypeptide reads, in one-letter code: Rho-related protein racB (193 aa).

11 residues coordinate GTP: alanine 13, glycine 15, lysine 16, threonine 17, cysteine 18, tyrosine 32, threonine 35, glycine 60, lysine 116, aspartate 118, and alanine 159. Threonine 17 provides a ligand contact to Mg(2+). 2 consecutive short sequence motifs (switch) follow at residues 26–37 (NAFPTEYVPTVF) and 57–75 (DTAGQEDYDRIRPLSYPQT). Position 35 (threonine 35) interacts with Mg(2+). Residue cysteine 190 is modified to Cysteine methyl ester. Cysteine 190 carries the S-geranylgeranyl cysteine lipid modification. Residues 191-193 (LIF) constitute a propeptide, removed in mature form.

The protein belongs to the small GTPase superfamily. Rho family. Mg(2+) serves as cofactor.

It localises to the cell membrane. Its subcellular location is the cytoplasm. The protein resides in the cytoskeleton. The enzyme catalyses GTP + H2O = GDP + phosphate + H(+). Its activity is regulated as follows. Regulated by guanine nucleotide exchange factors (GEFs) which promote the exchange of bound GDP for free GTP, GTPase activating proteins (GAPs) which increase the GTP hydrolysis activity, and GDP dissociation inhibitors which inhibit the dissociation of the nucleotide from the GTPase. Its function is as follows. Small GTPase which cycles between active GTP-bound and inactive GDP-bound states. In Entamoeba histolytica (strain ATCC 30459 / HM-1:IMSS / ABRM), this protein is Rho-related protein racB.